The chain runs to 272 residues: Ribosomal RNA large subunit methyltransferase E (272 aa).

S-adenosyl-L-methionine-binding residues include Gly50, Trp52, Asp68, Asp84, and Asp109. The active-site Proton acceptor is Lys149. Positions 196-254 (PLRRGDKFVVDIEKLGSGGDGAVLIEGFVVFVKEVEVGEKVRIKIADVKPNFAFADVEE) constitute a TRAM domain.

The protein belongs to the class I-like SAM-binding methyltransferase superfamily. RNA methyltransferase RlmE family.

The protein resides in the cytoplasm. It catalyses the reaction uridine(2552) in 23S rRNA + S-adenosyl-L-methionine = 2'-O-methyluridine(2552) in 23S rRNA + S-adenosyl-L-homocysteine + H(+). Specifically methylates the uridine in position 2552 of 23S rRNA at the 2'-O position of the ribose in the fully assembled 50S ribosomal subunit. This Methanosarcina acetivorans (strain ATCC 35395 / DSM 2834 / JCM 12185 / C2A) protein is Ribosomal RNA large subunit methyltransferase E.